Reading from the N-terminus, the 333-residue chain is Probable 4-hydroxyproline 2-epimerase (333 aa).

Residue Cys-90 is the Proton acceptor of the active site. Substrate contacts are provided by residues 91 to 92 (GH), His-223, and Asp-249. The Proton donor role is filled by Cys-253. 254-255 (GT) contacts substrate.

This sequence belongs to the proline racemase family.

It carries out the reaction trans-4-hydroxy-L-proline = cis-4-hydroxy-D-proline. Functionally, likely catalyzes the epimerization of trans-4-hydroxy-L-proline (t4LHyp) to cis-4-hydroxy-D-proline (c4DHyp). May be involved in the degradation pathway that converts t4LHyp to alpha-ketoglutarate, which would allow R.meliloti to grow on t4LHyp as a sole carbon source. The sequence is that of Probable 4-hydroxyproline 2-epimerase from Rhizobium meliloti (strain 1021) (Ensifer meliloti).